The chain runs to 256 residues: 3-isopropylmalate dehydratase small subunit 2 (256 aa).

The N-terminal 59 residues, 1 to 59 (MAYSLPTFPQALPCSSTKTSSSLATFRSPFLRFNGSTSLIPSSISITSRGTSSPTIIPR), are a transit peptide targeting the chloroplast.

The protein belongs to the LeuD family. As to quaternary structure, heterodimer of the large LEUC/IIL1 subunit and the small LEUD (SSU1, SSU2 or SSU3) subunits. Expressed in vascular bundles of roots, cotyledons and rosette leaves. Expressed in stem vascular bundles which branche off into lateral inflorescences. Expressed in connective tissues in anthers. In young seedlings, expressed in cotyledon epidermal cells and vasculare bundles. In hypocotyls, expressed in parenchyma cells surrounding the vasculature and further peripheral cells. In seedling roots, expressed in cells along the vasculature. In roots of adult plants, expressed in cells closely associated with the stele. In flowering stalks, expressed in parenchyma cells associated with the phloem or the xylem. Expressed in the vasculature of sepals and petals.

Its subcellular location is the plastid. The protein localises to the chloroplast stroma. It carries out the reaction (2R,3S)-3-isopropylmalate = (2S)-2-isopropylmalate. It catalyses the reaction a 2-(omega-methylsulfanyl)alkylmalate = a 2-(omega-methylsulfanyl)alkylmaleate + H2O. The catalysed reaction is 2-(3-methylsulfanyl)propylmalate = 2-(2-methylsulfanyl)propylmaleate + H2O. The enzyme catalyses a 3-(omega-methylsulfanyl)alkylmalate = a 2-(omega-methylsulfanyl)alkylmaleate + H2O. It carries out the reaction 2-(2-methylsulfanyl)ethylmalate = 2-(2-methylsulfanyl)ethylmaleate + H2O. It catalyses the reaction 3-(2-methylsulfanyl)ethylmalate = 2-(2-methylsulfanyl)ethylmaleate + H2O. The catalysed reaction is 3-(3-methylsulfanyl)propylmalate = 2-(2-methylsulfanyl)propylmaleate + H2O. Its pathway is amino-acid biosynthesis; L-leucine biosynthesis; L-leucine from 3-methyl-2-oxobutanoate: step 2/4. Functionally, catalyzes the isomerization between 2-isopropylmalate and 3-isopropylmalate, via the formation of 2-isopropylmaleate. Functions redundantly with LEUD2 in the methionine chain elongation pathway of aliphatic glucosinolate formation. This chain is 3-isopropylmalate dehydratase small subunit 2, found in Arabidopsis thaliana (Mouse-ear cress).